The primary structure comprises 204 residues: High frequency lysogenization protein HflD homolog (204 aa).

It belongs to the HflD family.

Its subcellular location is the cytoplasm. The protein resides in the cell inner membrane. This chain is High frequency lysogenization protein HflD homolog, found in Stenotrophomonas maltophilia (strain R551-3).